Consider the following 217-residue polypeptide: Probable transaldolase (217 aa).

The active-site Schiff-base intermediate with substrate is Lys83.

This sequence belongs to the transaldolase family. Type 3B subfamily.

The protein resides in the cytoplasm. It catalyses the reaction D-sedoheptulose 7-phosphate + D-glyceraldehyde 3-phosphate = D-erythrose 4-phosphate + beta-D-fructose 6-phosphate. The protein operates within carbohydrate degradation; pentose phosphate pathway; D-glyceraldehyde 3-phosphate and beta-D-fructose 6-phosphate from D-ribose 5-phosphate and D-xylulose 5-phosphate (non-oxidative stage): step 2/3. Its function is as follows. Transaldolase is important for the balance of metabolites in the pentose-phosphate pathway. The sequence is that of Probable transaldolase (tal) from Methanocaldococcus jannaschii (strain ATCC 43067 / DSM 2661 / JAL-1 / JCM 10045 / NBRC 100440) (Methanococcus jannaschii).